A 400-amino-acid chain; its full sequence is Serine/threonine-protein kinase AFC3 (400 aa).

The segment at 1–29 (MIANGFESMDKERVRKRPRMTWDEAPAEP) is disordered. One can recognise a Protein kinase domain in the interval 71 to 396 (YKILSKMGEG…ANEALDHPFF (326 aa)). ATP contacts are provided by residues 77–85 (MGEGTFGRV) and K100. The Proton acceptor role is filled by D196.

It belongs to the protein kinase superfamily. CMGC Ser/Thr protein kinase family. Lammer subfamily.

It catalyses the reaction L-seryl-[protein] + ATP = O-phospho-L-seryl-[protein] + ADP + H(+). It carries out the reaction L-threonyl-[protein] + ATP = O-phospho-L-threonyl-[protein] + ADP + H(+). The catalysed reaction is L-tyrosyl-[protein] + ATP = O-phospho-L-tyrosyl-[protein] + ADP + H(+). This chain is Serine/threonine-protein kinase AFC3 (AFC3), found in Arabidopsis thaliana (Mouse-ear cress).